A 352-amino-acid chain; its full sequence is Vacuolar protein sorting-associated protein 37C (352 aa).

Residue serine 29 is modified to Phosphoserine. Residues 78 to 167 form the VPS37 C-terminal domain; the sequence is VERCQEQKAK…RRPRALPELA (90 aa). The disordered stretch occupies residues 162–352; the sequence is ALPELAGDVP…HPPGPAWPRY (191 aa). Composition is skewed to pro residues over residues 173 to 185, 202 to 213, and 319 to 336; these read KRPP…PQAT, YPLPYSPSPGLP, and PGQP…PPGT.

The protein belongs to the VPS37 family. As to quaternary structure, component of the ESCRT-I complex (endosomal sorting complex required for transport I) which consists of TSG101, VPS28, a VPS37 protein (VPS37A to -D) and MVB12A or MVB12B in a 1:1:1:1 stoichiometry. Interacts with TSG101, VPS28, MVB12A and MVB12B. Component of the ESCRT-I complex (endosomal sorting complex required for transport I) which consists of TSG101, VPS28, a VPS37 protein (VPS37A to -D) and UBAP1 in a 1:1:1:1 stoichiometry. Interacts with HGS and STAM2. Interacts with CEP55. Phosphorylated by TBK1.

Its subcellular location is the late endosome membrane. In terms of biological role, component of the ESCRT-I complex, a regulator of vesicular trafficking process. Required for the sorting of endocytic ubiquitinated cargos into multivesicular bodies. May be involved in cell growth and differentiation. The chain is Vacuolar protein sorting-associated protein 37C (Vps37c) from Mus musculus (Mouse).